The sequence spans 228 residues: Probable octanoyltransferase (228 aa).

The region spanning S27–V198 is the BPL/LPL catalytic domain. Residues R65 to H72, S129 to G131, and G142 to A144 contribute to the substrate site. C160 serves as the catalytic Acyl-thioester intermediate.

It belongs to the LipB family.

The protein localises to the cytoplasm. The enzyme catalyses octanoyl-[ACP] + L-lysyl-[protein] = N(6)-octanoyl-L-lysyl-[protein] + holo-[ACP] + H(+). It participates in protein modification; protein lipoylation via endogenous pathway; protein N(6)-(lipoyl)lysine from octanoyl-[acyl-carrier-protein]: step 1/2. Catalyzes the transfer of endogenously produced octanoic acid from octanoyl-acyl-carrier-protein onto the lipoyl domains of lipoate-dependent enzymes. Lipoyl-ACP can also act as a substrate although octanoyl-ACP is likely to be the physiological substrate. This Pyrobaculum calidifontis (strain DSM 21063 / JCM 11548 / VA1) protein is Probable octanoyltransferase.